A 181-amino-acid polypeptide reads, in one-letter code: Crossover junction endodeoxyribonuclease RuvC (181 aa).

Residues aspartate 7, glutamate 67, and aspartate 139 contribute to the active site. Mg(2+) contacts are provided by aspartate 7, glutamate 67, and aspartate 139.

The protein belongs to the RuvC family. Homodimer which binds Holliday junction (HJ) DNA. The HJ becomes 2-fold symmetrical on binding to RuvC with unstacked arms; it has a different conformation from HJ DNA in complex with RuvA. In the full resolvosome a probable DNA-RuvA(4)-RuvB(12)-RuvC(2) complex forms which resolves the HJ. It depends on Mg(2+) as a cofactor.

It localises to the cytoplasm. The catalysed reaction is Endonucleolytic cleavage at a junction such as a reciprocal single-stranded crossover between two homologous DNA duplexes (Holliday junction).. Functionally, the RuvA-RuvB-RuvC complex processes Holliday junction (HJ) DNA during genetic recombination and DNA repair. Endonuclease that resolves HJ intermediates. Cleaves cruciform DNA by making single-stranded nicks across the HJ at symmetrical positions within the homologous arms, yielding a 5'-phosphate and a 3'-hydroxyl group; requires a central core of homology in the junction. The consensus cleavage sequence is 5'-(A/T)TT(C/G)-3'. Cleavage occurs on the 3'-side of the TT dinucleotide at the point of strand exchange. HJ branch migration catalyzed by RuvA-RuvB allows RuvC to scan DNA until it finds its consensus sequence, where it cleaves and resolves the cruciform DNA. The chain is Crossover junction endodeoxyribonuclease RuvC from Cupriavidus taiwanensis (strain DSM 17343 / BCRC 17206 / CCUG 44338 / CIP 107171 / LMG 19424 / R1) (Ralstonia taiwanensis (strain LMG 19424)).